The chain runs to 129 residues: Small ribosomal subunit protein uS9 (129 aa).

The protein belongs to the universal ribosomal protein uS9 family.

The polypeptide is Small ribosomal subunit protein uS9 (Chlorobium chlorochromatii (strain CaD3)).